We begin with the raw amino-acid sequence, 275 residues long: Urease accessory protein UreD (275 aa).

This sequence belongs to the UreD family. In terms of assembly, ureD, UreF and UreG form a complex that acts as a GTP-hydrolysis-dependent molecular chaperone, activating the urease apoprotein by helping to assemble the nickel containing metallocenter of UreC. The UreE protein probably delivers the nickel.

It is found in the cytoplasm. Its function is as follows. Required for maturation of urease via the functional incorporation of the urease nickel metallocenter. In Cereibacter sphaeroides (strain ATCC 17029 / ATH 2.4.9) (Rhodobacter sphaeroides), this protein is Urease accessory protein UreD.